We begin with the raw amino-acid sequence, 154 residues long: CASP-like protein 5B2 (154 aa).

Topologically, residues 1–10 are cytoplasmic; that stretch reads MKKLLGGPGT. A helical membrane pass occupies residues 11–31; sequence VCGLLLRIGQCASAAASIGVM. The Extracellular portion of the chain corresponds to 32 to 42; the sequence is VSAKEFSVHTA. Residues 43–63 traverse the membrane as a helical segment; that stretch reads FCYLIASMGLQLLWSFGLACL. Topologically, residues 64 to 77 are cytoplasmic; it reads DVYALRGKKDLQNP. A helical transmembrane segment spans residues 78-98; it reads ILVSLFVVGDWVTAMLSLAAA. Over 99–129 the chain is Extracellular; the sequence is CSSAGVVVLYEKDIKYCNTQSQYPCLRYEVA. The chain crosses the membrane as a helical span at residues 130–150; that stretch reads VALSFVTWIQIAVSSHVTFWI. The Cytoplasmic portion of the chain corresponds to 151–154; it reads LASV.

This sequence belongs to the Casparian strip membrane proteins (CASP) family. As to quaternary structure, homodimer and heterodimers. In terms of tissue distribution, expressed in the stele of the root.

Its subcellular location is the cell membrane. In Arabidopsis thaliana (Mouse-ear cress), this protein is CASP-like protein 5B2.